Here is a 255-residue protein sequence, read N- to C-terminus: Small ribosomal subunit protein uS2 (255 aa).

The disordered stretch occupies residues 230–255 (QSSSGRDLGASSEVPVEPALEEAAEG).

This sequence belongs to the universal ribosomal protein uS2 family.

The sequence is that of Small ribosomal subunit protein uS2 from Rhizobium etli (strain CIAT 652).